The chain runs to 192 residues: Adenylate kinase (192 aa).

10 to 15 (GSGKGT) is an ATP binding site. Residues 30-59 (STGDMLREVISRETEVGRKAKAIINAGALV) form an NMP region. Residues Thr-31, Arg-36, 57 to 59 (ALV), 85 to 88 (GYPR), and Gln-92 contribute to the AMP site. Positions 126–142 (KRVQETIAVGGQVRSDD) are LID. Arg-127 is an ATP binding site. AMP contacts are provided by Arg-139 and Arg-150. Met-178 contributes to the ATP binding site.

This sequence belongs to the adenylate kinase family. Monomer.

The protein resides in the cytoplasm. It catalyses the reaction AMP + ATP = 2 ADP. Its pathway is purine metabolism; AMP biosynthesis via salvage pathway; AMP from ADP: step 1/1. Catalyzes the reversible transfer of the terminal phosphate group between ATP and AMP. Plays an important role in cellular energy homeostasis and in adenine nucleotide metabolism. In Bartonella quintana (strain Toulouse) (Rochalimaea quintana), this protein is Adenylate kinase.